Reading from the N-terminus, the 74-residue chain is UPF0154 protein LSL_0542 (74 aa).

The chain crosses the membrane as a helical span at residues 5–25 (IWVLIVIIAAVLGFVGGFFAA).

This sequence belongs to the UPF0154 family.

The protein resides in the cell membrane. In Ligilactobacillus salivarius (strain UCC118) (Lactobacillus salivarius), this protein is UPF0154 protein LSL_0542.